The sequence spans 321 residues: Fe-S cluster assembly protein DRE2 (321 aa).

The segment at 1–161 is N-terminal SAM-like domain; that stretch reads MPAPVPPTAF…STPVTLSGAR (161 aa). Positions 123-168 are disordered; it reads PSPSTLAYTSPSAPSLPTVASDPSPAPSSSTPVTLSGARPLQLRRN. Positions 139–156 are enriched in low complexity; that stretch reads PTVASDPSPAPSSSTPVT. The interval 162-197 is linker; that stretch reads PLQLRRNGDKARKAALWAIDSPLIPDGGKSLLTPAD. Cys-203, Cys-219, Cys-222, and Cys-224 together coordinate [2Fe-2S] cluster. The segment at 203 to 224 is fe-S binding site A; it reads CVFPAENGKPVKRRRACKDCTC. Cys-285, Cys-288, Cys-296, and Cys-299 together coordinate [4Fe-4S] cluster. Short sequence motifs (cx2C motif) lie at residues 285–288 and 296–299; these read CGSC and CSSC. The fe-S binding site B stretch occupies residues 285–299; it reads CGSCYLGDAFRCSSC.

It belongs to the anamorsin family. In terms of assembly, monomer. Interacts with TAH18. Interacts with MIA40. The cofactor is [2Fe-2S] cluster. [4Fe-4S] cluster serves as cofactor.

It is found in the cytoplasm. The protein resides in the mitochondrion intermembrane space. Functionally, component of the cytosolic iron-sulfur (Fe-S) protein assembly (CIA) machinery required for the maturation of extramitochondrial Fe-S proteins. Part of an electron transfer chain functioning in an early step of cytosolic Fe-S biogenesis, facilitating the de novo assembly of a [4Fe-4S] cluster on the scaffold complex CFD1-NBP35. Electrons are transferred to DRE2 from NADPH via the FAD- and FMN-containing protein TAH18. TAH18-DRE2 are also required for the assembly of the diferric tyrosyl radical cofactor of ribonucleotide reductase (RNR), probably by providing electrons for reduction during radical cofactor maturation in the catalytic small subunit RNR2. This Cryptococcus neoformans var. neoformans serotype D (strain B-3501A) (Filobasidiella neoformans) protein is Fe-S cluster assembly protein DRE2.